The sequence spans 898 residues: Protein translocase subunit SecA (898 aa).

ATP is bound by residues glutamine 87, 105-109, and aspartate 512; that span reads GEGKT. Positions 855-865 are enriched in polar residues; that stretch reads MQYQNNEGTSS. The segment at 855-898 is disordered; the sequence is MQYQNNEGTSSLHEKSEHKIGRNESCPCGSGKKYKHCHGSKAKY. Over residues 866-876 the composition is skewed to basic and acidic residues; sequence LHEKSEHKIGR. Cysteine 880, cysteine 882, cysteine 891, and histidine 892 together coordinate Zn(2+). Basic residues predominate over residues 886–898; the sequence is KKYKHCHGSKAKY.

It belongs to the SecA family. As to quaternary structure, monomer and homodimer. Part of the essential Sec protein translocation apparatus which comprises SecA, SecYEG and auxiliary proteins SecDF-YajC and YidC. Zn(2+) serves as cofactor.

It localises to the cell inner membrane. Its subcellular location is the cytoplasm. It catalyses the reaction ATP + H2O + cellular proteinSide 1 = ADP + phosphate + cellular proteinSide 2.. Part of the Sec protein translocase complex. Interacts with the SecYEG preprotein conducting channel. Has a central role in coupling the hydrolysis of ATP to the transfer of proteins into and across the cell membrane, serving both as a receptor for the preprotein-SecB complex and as an ATP-driven molecular motor driving the stepwise translocation of polypeptide chains across the membrane. In Histophilus somni (strain 2336) (Haemophilus somnus), this protein is Protein translocase subunit SecA.